Consider the following 125-residue polypeptide: Holo-[acyl-carrier-protein] synthase (125 aa).

Mg(2+)-binding residues include D8 and E57.

It belongs to the P-Pant transferase superfamily. AcpS family. Requires Mg(2+) as cofactor.

It localises to the cytoplasm. The enzyme catalyses apo-[ACP] + CoA = holo-[ACP] + adenosine 3',5'-bisphosphate + H(+). In terms of biological role, transfers the 4'-phosphopantetheine moiety from coenzyme A to a Ser of acyl-carrier-protein. The chain is Holo-[acyl-carrier-protein] synthase from Laribacter hongkongensis (strain HLHK9).